Here is a 158-residue protein sequence, read N- to C-terminus: NKG2-F type II integral membrane protein (158 aa).

A compositionally biased stretch (polar residues) spans 1 to 12 (MNKQRGTYSEVS). Positions 1-30 (MNKQRGTYSEVSLAQDPKRQQRKLKGNKSS) are disordered. The Cytoplasmic segment spans residues 1-74 (MNKQRGTYSE…LPPPERLTAE (74 aa)). The chain crosses the membrane as a helical span at residues 75 to 95 (VLGIICIVLMATVLKTIVLIP). The Extracellular portion of the chain corresponds to 96–158 (CIGVLEQNNF…VLQRTLICFL (63 aa)).

Can form disulfide-bonded heterodimer with CD94. As to expression, natural killer cells.

It is found in the membrane. May play a role as a receptor for the recognition of MHC class I HLA-E molecules by NK cells. This Pan troglodytes (Chimpanzee) protein is NKG2-F type II integral membrane protein (KLRC4).